The sequence spans 180 residues: Cytidylate kinase 2 (180 aa).

7–15 serves as a coordination point for ATP; it reads GKSGCGNTT.

This sequence belongs to the cytidylate kinase family. Type 2 subfamily.

The protein localises to the cytoplasm. It carries out the reaction CMP + ATP = CDP + ADP. The catalysed reaction is dCMP + ATP = dCDP + ADP. This Borreliella burgdorferi (strain ATCC 35210 / DSM 4680 / CIP 102532 / B31) (Borrelia burgdorferi) protein is Cytidylate kinase 2 (cmk2).